Reading from the N-terminus, the 514-residue chain is Vacuolar aminopeptidase 1 (514 aa).

Residues Met1–Leu45 constitute a propeptide, required for vacuolar localization. Mediates aggregation and vesicle formation in Cvt pathway. Asn107 and Asn110 each carry an N-linked (GlcNAc...) asparagine glycan. Residue His132 coordinates Zn(2+). Residue His210 coordinates substrate. Zn(2+) is bound by residues Asp303, Glu339, and Glu340. Substrate is bound at residue Glu339. Ser356 carries the post-translational modification Phosphoserine. Asp385 contacts Zn(2+). Residues Asp385 and His388 each coordinate substrate. Residue Asn448 is glycosylated (N-linked (GlcNAc...) asparagine). Residue His479 participates in Zn(2+) binding.

It belongs to the peptidase M18 family. As to quaternary structure, homododecamer. The precursor form of aminopeptidase 1 (prApe1) assembles into dodecamers and further aggregates into higher multimers (the Ape1 complex) in the cytoplasm. The Ape1 complex is disaggregated in the vacuolar lumen, but mature aminopeptidase 1 (mApe1) retains its dodecameric form. Dodecamer assembly in the cytoplasm is essential for formation of an enzymatically active complex. If cytoplasmic homododecamerization of prApe1 is disturbed in mutants, homododecamers of mApe1 will form in the vacuole, but they are enzymatically inactive. Interacts with ATG19. Zn(2+) is required as a cofactor. Post-translationally, synthesized in a precursor form (prApe1) that has an amino-terminal propeptide. The N-terminal extension of the 61 kDa precursor is proteolytically processed in two sequential steps. The first step involves proteinase A (PrA/PEP4) and produces a 55 kDa unstable intermediate (iAPI). The second step involves proteinase B (PrB/PRB1) and converts iAPI into the 50 kDa stable, mature enzyme (mApe1).

Its subcellular location is the vacuole. The catalysed reaction is Release of an N-terminal amino acid, preferably a neutral or hydrophobic one, from a polypeptide. Aminoacyl-arylamides are poor substrates.. With respect to regulation, strongly and specifically activated by Cl(-) and Br(-), which act as positive allosteric effectors. Inactivated by metal-chelating agents. Functionally, resident vacuolar enzyme that catalyzes the removal of amino acids from the N-terminus of peptides and proteins. Also acts as the major cargo protein of the cytoplasm-to-vacuole targeting (Cvt) pathway. The precursor form of aminopeptidase 1 (prApe1) assembles into dodecamers and the propeptide mediates the aggregation of dodecamers into higher multimers. The multimers are then recognized via the propeptide by their receptor ATG19, and ATG19 further interacts with ATG11, which tethers the APE1-ATG19 complex to the pre-autophagosomal structure (PAS). The cargo-receptor complex (also Cvt complex) is selectively enwrapped by a double-membrane structure termed the Cvt vesicle under vegetative growth conditions and by a similar but larger double-membrane structure termed the autophagosome under nitrogen starvation conditions. The Cvt vesicle or the autophagosome fuses with the vacuolar membrane and release its content in the vacuolar lumen. In the vacuole, prApe1 is processed into mature aminopeptidase 1 (mApe1). The chain is Vacuolar aminopeptidase 1 from Saccharomyces cerevisiae (strain ATCC 204508 / S288c) (Baker's yeast).